The sequence spans 314 residues: Homoserine O-acetyltransferase (314 aa).

The active-site Acyl-thioester intermediate is C142. K163 and S192 together coordinate substrate. The active-site Proton acceptor is H235. E237 is a catalytic residue. Residue R249 coordinates substrate.

Belongs to the MetA family.

It is found in the cytoplasm. The catalysed reaction is L-homoserine + acetyl-CoA = O-acetyl-L-homoserine + CoA. It functions in the pathway amino-acid biosynthesis; L-methionine biosynthesis via de novo pathway; O-acetyl-L-homoserine from L-homoserine: step 1/1. Transfers an acetyl group from acetyl-CoA to L-homoserine, forming acetyl-L-homoserine. The sequence is that of Homoserine O-acetyltransferase from Streptococcus mutans serotype c (strain ATCC 700610 / UA159).